Reading from the N-terminus, the 65-residue chain is UPF0434 protein PSHAa1659 (65 aa).

This sequence belongs to the UPF0434 family.

The sequence is that of UPF0434 protein PSHAa1659 from Pseudoalteromonas translucida (strain TAC 125).